A 218-amino-acid polypeptide reads, in one-letter code: Pyridoxine/pyridoxamine 5'-phosphate oxidase (218 aa).

Residues 14–17 and K72 contribute to the substrate site; that span reads RREY. FMN contacts are provided by residues 67–72, 82–83, R88, K89, and Q111; these read RIVLLK and YT. The substrate site is built by Y129, R133, and S137. FMN-binding positions include 146–147 and W191; that span reads QS. 197–199 is a binding site for substrate; that stretch reads RLH. R201 contacts FMN.

The protein belongs to the pyridoxamine 5'-phosphate oxidase family. Homodimer. FMN is required as a cofactor.

The enzyme catalyses pyridoxamine 5'-phosphate + O2 + H2O = pyridoxal 5'-phosphate + H2O2 + NH4(+). It carries out the reaction pyridoxine 5'-phosphate + O2 = pyridoxal 5'-phosphate + H2O2. It participates in cofactor metabolism; pyridoxal 5'-phosphate salvage; pyridoxal 5'-phosphate from pyridoxamine 5'-phosphate: step 1/1. It functions in the pathway cofactor metabolism; pyridoxal 5'-phosphate salvage; pyridoxal 5'-phosphate from pyridoxine 5'-phosphate: step 1/1. Its function is as follows. Catalyzes the oxidation of either pyridoxine 5'-phosphate (PNP) or pyridoxamine 5'-phosphate (PMP) into pyridoxal 5'-phosphate (PLP). In Cronobacter sakazakii (strain ATCC BAA-894) (Enterobacter sakazakii), this protein is Pyridoxine/pyridoxamine 5'-phosphate oxidase.